The sequence spans 197 residues: Adenylyl-sulfate kinase (197 aa).

33-40 (GLSGSGKS) contributes to the ATP binding site. Ser107 acts as the Phosphoserine intermediate in catalysis.

This sequence belongs to the APS kinase family.

It carries out the reaction adenosine 5'-phosphosulfate + ATP = 3'-phosphoadenylyl sulfate + ADP + H(+). The protein operates within sulfur metabolism; hydrogen sulfide biosynthesis; sulfite from sulfate: step 2/3. Its function is as follows. Catalyzes the synthesis of activated sulfate. The polypeptide is Adenylyl-sulfate kinase (Bacillus velezensis (strain DSM 23117 / BGSC 10A6 / LMG 26770 / FZB42) (Bacillus amyloliquefaciens subsp. plantarum)).